The following is a 545-amino-acid chain: Germacrene D synthase 1 (545 aa).

Positions 298, 302, 443, and 451 each coordinate Mg(2+). The DDXXD motif motif lies at 298–302 (DDTFD).

Belongs to the terpene synthase family. It depends on Mg(2+) as a cofactor.

The protein localises to the cytoplasm. The protein resides in the cytosol. The catalysed reaction is (2E,6E)-farnesyl diphosphate = (-)-germacrene D + diphosphate. It functions in the pathway secondary metabolite biosynthesis; terpenoid biosynthesis. Sesquiterpene synthase involved in germacrene D biosynthesis. Also produces at least 13 additional sesquiterpene products, including germacrene C and (+)-germacrene A, beta-ylangene, (E)-beta-farnesene and (E,E)-alpha-farnesene. The polypeptide is Germacrene D synthase 1 (Pogostemon cablin (Patchouli)).